A 435-amino-acid chain; its full sequence is Glutamate-1-semialdehyde 2,1-aminomutase (435 aa).

Lys-270 bears the N6-(pyridoxal phosphate)lysine mark.

The protein belongs to the class-III pyridoxal-phosphate-dependent aminotransferase family. HemL subfamily. As to quaternary structure, homodimer. The cofactor is pyridoxal 5'-phosphate.

The protein localises to the cytoplasm. The enzyme catalyses (S)-4-amino-5-oxopentanoate = 5-aminolevulinate. Its pathway is porphyrin-containing compound metabolism; protoporphyrin-IX biosynthesis; 5-aminolevulinate from L-glutamyl-tRNA(Glu): step 2/2. The polypeptide is Glutamate-1-semialdehyde 2,1-aminomutase (Wigglesworthia glossinidia brevipalpis).